The following is a 734-amino-acid chain: Photosystem I P700 chlorophyll a apoprotein A2 (734 aa).

A run of 8 helical transmembrane segments spans residues 46-69 (IFASHFGQLAIIFLWTSGNLFHVA), 135-158 (LYIGALFLLFLSAVSLLGGWLHLQ), 175-199 (LNHHLSGLFGVSSLAWTGHLVHVAI), 273-291 (MAHHHLAIAFLFLIAGHMY), 330-353 (LHFQLGLALASLGVITSLVAQHMY), 369-395 (AALYTHHQYIAGFIMTGAFAHGAIFFI), 417-439 (AIISHLSWASLFLGFHTLGLYVH), and 517-535 (FLVHHAIALGLHTTTLILV). [4Fe-4S] cluster is bound by residues Cys559 and Cys568. Helical transmembrane passes span 575–596 (AFYLAVFWMLNTIGWVTFYWHW) and 643–665 (LSVWAWMFLFGHLVWATGFMFLI). Residues His654, Met662, and Tyr670 each coordinate chlorophyll a. Trp671 is a phylloquinone binding site. A helical transmembrane segment spans residues 707-727 (LVGLAHFSVGYIFTYAAFLIA).

The protein belongs to the PsaA/PsaB family. As to quaternary structure, the PsaA/B heterodimer binds the P700 chlorophyll special pair and subsequent electron acceptors. PSI consists of a core antenna complex that captures photons, and an electron transfer chain that converts photonic excitation into a charge separation. The eukaryotic PSI reaction center is composed of at least 11 subunits. It depends on P700 is a chlorophyll a/chlorophyll a' dimer, A0 is one or more chlorophyll a, A1 is one or both phylloquinones and FX is a shared 4Fe-4S iron-sulfur center. as a cofactor.

It is found in the plastid. It localises to the chloroplast thylakoid membrane. The enzyme catalyses reduced [plastocyanin] + hnu + oxidized [2Fe-2S]-[ferredoxin] = oxidized [plastocyanin] + reduced [2Fe-2S]-[ferredoxin]. In terms of biological role, psaA and PsaB bind P700, the primary electron donor of photosystem I (PSI), as well as the electron acceptors A0, A1 and FX. PSI is a plastocyanin-ferredoxin oxidoreductase, converting photonic excitation into a charge separation, which transfers an electron from the donor P700 chlorophyll pair to the spectroscopically characterized acceptors A0, A1, FX, FA and FB in turn. Oxidized P700 is reduced on the lumenal side of the thylakoid membrane by plastocyanin. The sequence is that of Photosystem I P700 chlorophyll a apoprotein A2 from Populus alba (White poplar).